A 212-amino-acid chain; its full sequence is Ras-related protein Rab-21 (212 aa).

GTP-binding positions include 14 to 21 (GEGCVGKT), 62 to 66 (DTAGQ), and 120 to 123 (NKCD). Residues 181-212 (TNTTGQTTNRSERIPIVPDSDSGNKQPGCCSN) form a disordered region. Over residues 201–212 (DSGNKQPGCCSN) the composition is skewed to polar residues. S-geranylgeranyl cysteine attachment occurs at residues C209 and C210.

This sequence belongs to the small GTPase superfamily. Rab family. As to quaternary structure, interacts with LIM domain proteins limF and ChLim.

Its subcellular location is the cell membrane. In terms of biological role, involved in the regulation of phagocytosis. This chain is Ras-related protein Rab-21 (rab21), found in Dictyostelium discoideum (Social amoeba).